The following is a 263-amino-acid chain: Putative 2-aminoethylphosphonate transport system permease protein PhnV (263 aa).

6 helical membrane passes run 13-33 (GVVASVLFIVFFFLPLAVILM), 69-89 (LTIGFCASLFALLCGVWAALA), 104-124 (VFYLPSAIPSVSVGLGILVAF), 131-151 (MNGTLWIVLTAHFVLISAFTF), 185-205 (LPLLMPWMVSELALSLSLSMG), and 233-253 (NIADGAALTIVLVAITLLLMM). Residues 65 to 253 (LLASLTIGFC…LVAITLLLMM (189 aa)) enclose the ABC transmembrane type-1 domain.

Belongs to the binding-protein-dependent transport system permease family.

Its subcellular location is the cell inner membrane. In terms of biological role, probably part of the PhnSTUV complex (TC 3.A.1.11.5) involved in 2-aminoethylphosphonate import. Probably responsible for the translocation of the substrate across the membrane. This chain is Putative 2-aminoethylphosphonate transport system permease protein PhnV (phnV), found in Salmonella typhi.